The chain runs to 58 residues: Conotoxin Ar5.4 (58 aa).

Positions 1 to 20 (RIQSDLIRAALEDADMKNEK) are excised as a propeptide.

It belongs to the conotoxin T superfamily. Post-translationally, contains 2 disulfide bonds that can be either 'C1-C3, C2-C4' or 'C1-C4, C2-C3', since these disulfide connectivities have been observed for conotoxins with cysteine framework V (for examples, see AC P0DQQ7 and AC P81755). In terms of tissue distribution, expressed by the venom duct.

The protein localises to the secreted. This chain is Conotoxin Ar5.4, found in Conus arenatus (Sand-dusted cone).